The chain runs to 500 residues: Maintenance of mitochondrial morphology protein 1 (500 aa).

Over 1 to 42 (MATQVATPLSPSYTSELIIVCHHVLQHSPTPLTPHSLSFTQG) the chain is Lumenal. The helical transmembrane segment at 43-63 (FLLGQLSIALLIFFFIKFFIF) threads the bilayer. At 64-500 (GEPPSADDRS…PGALAPGTFR (437 aa)) the chain is on the cytoplasmic side. Residues 141–375 (QPESLDWFNV…EPRFQQIVLP (235 aa)) form the SMP-LTD domain. 2 stretches are compositionally biased toward low complexity: residues 283 to 294 (SSSPPSTSTTTP) and 302 to 316 (NSTT…HRPT). Disordered regions lie at residues 283 to 316 (SSSP…HRPT) and 406 to 500 (EEEE…GTFR). Residues 406-415 (EEEEEEEEDG) show a composition bias toward acidic residues. The segment covering 438-471 (EGAKLREAEIRAGVRKQERPGMSRAQTSREEGVR) has biased composition (basic and acidic residues).

It belongs to the MMM1 family. As to quaternary structure, homodimer. Component of the ER-mitochondria encounter structure (ERMES) or MDM complex, composed of MMM1, MDM10, MDM12 and MDM34. An MMM1 homodimer associates with one molecule of MDM12 on each side in a pairwise head-to-tail manner, and the SMP-LTD domains of MMM1 and MDM12 generate a continuous hydrophobic tunnel for phospholipid trafficking.

The protein localises to the endoplasmic reticulum membrane. Functionally, component of the ERMES/MDM complex, which serves as a molecular tether to connect the endoplasmic reticulum (ER) and mitochondria. Components of this complex are involved in the control of mitochondrial shape and protein biogenesis, and function in nonvesicular lipid trafficking between the ER and mitochondria. The MDM12-MMM1 subcomplex functions in the major beta-barrel assembly pathway that is responsible for biogenesis of all outer membrane beta-barrel proteins, and acts in a late step after the SAM complex. The MDM10-MDM12-MMM1 subcomplex further acts in the TOM40-specific pathway after the action of the MDM12-MMM1 complex. Essential for establishing and maintaining the structure of mitochondria and maintenance of mtDNA nucleoids. In Phaeosphaeria nodorum (strain SN15 / ATCC MYA-4574 / FGSC 10173) (Glume blotch fungus), this protein is Maintenance of mitochondrial morphology protein 1.